We begin with the raw amino-acid sequence, 420 residues long: Acetylornithine aminotransferase (420 aa).

Pyridoxal 5'-phosphate is bound by residues 118-119 (GA) and phenylalanine 151. Arginine 154 serves as a coordination point for N(2)-acetyl-L-ornithine. 242 to 245 (DEVQ) lines the pyridoxal 5'-phosphate pocket. An N6-(pyridoxal phosphate)lysine modification is found at lysine 271. Serine 298 lines the N(2)-acetyl-L-ornithine pocket. Residue threonine 299 participates in pyridoxal 5'-phosphate binding.

The protein belongs to the class-III pyridoxal-phosphate-dependent aminotransferase family. ArgD subfamily. As to quaternary structure, homodimer. Requires pyridoxal 5'-phosphate as cofactor.

It is found in the cytoplasm. The enzyme catalyses N(2)-acetyl-L-ornithine + 2-oxoglutarate = N-acetyl-L-glutamate 5-semialdehyde + L-glutamate. Its pathway is amino-acid biosynthesis; L-arginine biosynthesis; N(2)-acetyl-L-ornithine from L-glutamate: step 4/4. This Parasynechococcus marenigrum (strain WH8102) protein is Acetylornithine aminotransferase.